The following is a 476-amino-acid chain: MIEDVVESLKNGNLTPEDYVEKTYEKIERVEKLIHSFITIRNKQEIIDEVKKNISNKHGKLAGVLIAIKDNISTLGIRTTCASRILEDYIPPYDATVVEKLKSEGAVIIGKTNMDEFAMGSTTETSYFGPTKNPWDLERTPGGSSGGSGAVLAGGIVELALGSDTGGSIRAPAAFNGVFGLKPSYGTVSRYGLIAYANSLEQIGPMAKNAEDLELLYDVIAGEDWRDATTISINKNEYKRDGSSKVDLKNIKIAVLKDILEASEKPVTSAFNEILDKLVSEGVSIDYIEFKLAEYALPAYYIIAMSEASSNLARFDGVRYGYSAHYDGIWKDTYGKNRGEGFGIEVKRRIMLGSFILSAGYYEQYYIKALKVRRLIKDEIDRILKQYDFIASPTMPIIPPKLGEVVGDPLKMYAMDLNTVIANLAGVPALSQPIGFYNNLPIGLQLMGSYLSDYKLINISKNIEKISKYYNLTANI.

Catalysis depends on charge relay system residues Lys-69 and Ser-144. The active-site Acyl-ester intermediate is Ser-168.

It belongs to the amidase family. GatA subfamily. As to quaternary structure, heterotrimer of A, B and C subunits.

It catalyses the reaction L-glutamyl-tRNA(Gln) + L-glutamine + ATP + H2O = L-glutaminyl-tRNA(Gln) + L-glutamate + ADP + phosphate + H(+). In terms of biological role, allows the formation of correctly charged Gln-tRNA(Gln) through the transamidation of misacylated Glu-tRNA(Gln) in organisms which lack glutaminyl-tRNA synthetase. The reaction takes place in the presence of glutamine and ATP through an activated gamma-phospho-Glu-tRNA(Gln). The polypeptide is Glutamyl-tRNA(Gln) amidotransferase subunit A (Sulfolobus acidocaldarius (strain ATCC 33909 / DSM 639 / JCM 8929 / NBRC 15157 / NCIMB 11770)).